The primary structure comprises 577 residues: Guanine nucleotide-binding protein-like 3-like protein (577 aa).

Over residues 1 to 30 (MMKIRHKNKKPGKGSKGCKKPARQNGKKVT) the composition is skewed to basic residues. The tract at residues 1–75 (MMKIRHKNKK…VAREQERQRH (75 aa)) is disordered. Positions 9–28 (KKPGKGSKGCKKPARQNGKK) are required for nucleolar localization. Residues 42-75 (GNDHASREAELKKKRVEEMREKQQVAREQERQRH) are compositionally biased toward basic and acidic residues. Positions 43–103 (NDHASREAEL…QKEEVLQELN (61 aa)) form a coiled coil. Residues 118–304 (YKEFRKVVEY…LLDAPGIVPG (187 aa)) form the CP-type G domain. GTP is bound by residues 166–169 (NKID), 253–260 (GLPNVGKS), and 297–300 (DAPG).

The protein belongs to the TRAFAC class YlqF/YawG GTPase family. In terms of assembly, interacts with MDM2; this interaction, which occurs in the nucleoplasm, stabilizes MDM2. Indirectly interacts with TP53, via MDM2-binding. Interacts with TERF1; this interaction probably occurs in the nucleoplasm and is increased during mitosis, when the nucleolus is disassembled. This binding may promote TERF1 homodimerization. Interacts with TERT.

It localises to the nucleus. It is found in the nucleolus. Its function is as follows. Stabilizes TERF1 telomeric association by preventing TERF1 recruitment by PML. Stabilizes TERF1 protein by preventing its ubiquitination and hence proteasomal degradation. Does so by interfering with TERF1-binding to FBXO4 E3 ubiquitin-protein ligase. Required for cell proliferation. By stabilizing TRF1 protein during mitosis, promotes metaphase-to-anaphase transition. Stabilizes MDM2 protein by preventing its ubiquitination, and hence proteasomal degradation. By acting on MDM2, may affect TP53 activity. Required for normal processing of ribosomal pre-rRNA. Binds GTP. The chain is Guanine nucleotide-binding protein-like 3-like protein (Gnl3l) from Mus musculus (Mouse).